A 151-amino-acid polypeptide reads, in one-letter code: Deoxyuridine 5'-triphosphate nucleotidohydrolase (151 aa).

Residues 69–71 (RSG), Asn-82, 86–88 (LID), and Met-96 each bind substrate.

The protein belongs to the dUTPase family. It depends on Mg(2+) as a cofactor.

It carries out the reaction dUTP + H2O = dUMP + diphosphate + H(+). Its pathway is pyrimidine metabolism; dUMP biosynthesis; dUMP from dCTP (dUTP route): step 2/2. This enzyme is involved in nucleotide metabolism: it produces dUMP, the immediate precursor of thymidine nucleotides and it decreases the intracellular concentration of dUTP so that uracil cannot be incorporated into DNA. The sequence is that of Deoxyuridine 5'-triphosphate nucleotidohydrolase from Blochmanniella floridana.